The chain runs to 243 residues: Phosphate-specific transport system accessory protein PhoU (243 aa).

It belongs to the PhoU family. Homodimer. Interacts with phosphate regulon transcriptional regulatory protein PhoB and ferric uptake regulation protein Fur.

The protein localises to the cytoplasm. Its function is as follows. Part of the phosphate (Pho) regulon, which plays a key role in phosphate homeostasis. Encoded together with proteins of the phosphate-specific transport (Pst) system in the polycistronic pstSCAB-phoU operon. PhoU is essential for the repression of the Pho regulon at high phosphate conditions. In this role, it may bind, possibly as a chaperone, to PhoR, PhoB or a PhoR-PhoB complex to promote dephosphorylation of phospho-PhoB, or inhibit formation of the PhoR-PhoB transitory complex. The sequence is that of Phosphate-specific transport system accessory protein PhoU from Edwardsiella tarda.